The sequence spans 289 residues: Protease HtpX (289 aa).

2 helical membrane-spanning segments follow: residues 6-26 and 38-58; these read ILFLLTNLAITFVLGIVLNII and TGILMMSLLFGFTGSLISLFM. H144 is a Zn(2+) binding site. E145 is a catalytic residue. H148 is a binding site for Zn(2+). The next 2 helical transmembrane spans lie at 152 to 172 and 194 to 214; these read GDMVTMTLLQGVLNTFVIFLS and LVFWVVDIALQMIFGILATMI. E223 is a Zn(2+) binding site.

It belongs to the peptidase M48B family. Zn(2+) serves as cofactor.

It localises to the cell inner membrane. This chain is Protease HtpX, found in Haemophilus ducreyi (strain 35000HP / ATCC 700724).